Here is a 330-residue protein sequence, read N- to C-terminus: Ketol-acid reductoisomerase (NADP(+)) (330 aa).

One can recognise a KARI N-terminal Rossmann domain in the interval Ala2–Thr182. NADP(+) is bound by residues Tyr25–Gln28, Ser51, Ser53, and Asp83–Gln86. Residue His108 is part of the active site. Gly134 contributes to the NADP(+) binding site. Residues Thr183–Leu328 enclose the KARI C-terminal knotted domain. Residues Asp191, Glu195, Glu227, and Glu231 each coordinate Mg(2+). Substrate is bound at residue Ser252.

It belongs to the ketol-acid reductoisomerase family. Requires Mg(2+) as cofactor.

It catalyses the reaction (2R)-2,3-dihydroxy-3-methylbutanoate + NADP(+) = (2S)-2-acetolactate + NADPH + H(+). The enzyme catalyses (2R,3R)-2,3-dihydroxy-3-methylpentanoate + NADP(+) = (S)-2-ethyl-2-hydroxy-3-oxobutanoate + NADPH + H(+). It functions in the pathway amino-acid biosynthesis; L-isoleucine biosynthesis; L-isoleucine from 2-oxobutanoate: step 2/4. The protein operates within amino-acid biosynthesis; L-valine biosynthesis; L-valine from pyruvate: step 2/4. Involved in the biosynthesis of branched-chain amino acids (BCAA). Catalyzes an alkyl-migration followed by a ketol-acid reduction of (S)-2-acetolactate (S2AL) to yield (R)-2,3-dihydroxy-isovalerate. In the isomerase reaction, S2AL is rearranged via a Mg-dependent methyl migration to produce 3-hydroxy-3-methyl-2-ketobutyrate (HMKB). In the reductase reaction, this 2-ketoacid undergoes a metal-dependent reduction by NADPH to yield (R)-2,3-dihydroxy-isovalerate. In Synechococcus sp. (strain JA-2-3B'a(2-13)) (Cyanobacteria bacterium Yellowstone B-Prime), this protein is Ketol-acid reductoisomerase (NADP(+)).